A 447-amino-acid polypeptide reads, in one-letter code: GTPase Der (447 aa).

2 EngA-type G domains span residues 4–165 (QIIT…PEEE) and 180–357 (LQIV…KIWN). Residues 10-17 (GRPNVGKS), 57-61 (DTPGL), 119-122 (NKCE), 186-193 (GRPNAGKS), 233-237 (DTAGL), and 298-301 (NKWD) contribute to the GTP site. In terms of domain architecture, KH-like spans 358–443 (KKITTSKLNE…PIRFIYVKTK (86 aa)).

The protein belongs to the TRAFAC class TrmE-Era-EngA-EngB-Septin-like GTPase superfamily. EngA (Der) GTPase family. As to quaternary structure, associates with the 50S ribosomal subunit.

In terms of biological role, GTPase that plays an essential role in the late steps of ribosome biogenesis. This is GTPase Der from Rickettsia conorii (strain ATCC VR-613 / Malish 7).